Reading from the N-terminus, the 266-residue chain is Putative deoxyribonuclease tatdn3 (266 aa).

Zn(2+) contacts are provided by His9, His11, Glu103, His143, His166, and Asp214.

This sequence belongs to the metallo-dependent hydrolases superfamily. TatD-type hydrolase family. Requires Mn(2+) as cofactor. Ca(2+) serves as cofactor. It depends on Mg(2+) as a cofactor. Zn(2+) is required as a cofactor.

The protein resides in the nucleus. The 3'-exonuclease activity is sensitive to the metal ion present in the active site, whereas the AP endodeoxyribonuclease activity is observed in a variety of divalent metal cofactors. 3'-exoxonuclease activity is suppressed in the presence of Ca(2+), Zn(2+) and Ni(2+). Functionally, exhibits 3'-exonuclease activities and apurinic/apyrimidinic (AP) endonuclease (in vitro). Show preferential AP endonuclease activity on double-stranded DNA substrates and 3'- exonuclease activity on single-stranded DNA. This Danio rerio (Zebrafish) protein is Putative deoxyribonuclease tatdn3 (tatdn3).